Here is an 878-residue protein sequence, read N- to C-terminus: Splicing factor 3B subunit 2 (878 aa).

The span at 1-10 (MAAEHPEPPK) shows a compositional bias: basic and acidic residues. Disordered regions lie at residues 1–25 (MAAE…GHYG) and 67–136 (RPVL…LRVG). Lys10 is covalently cross-linked (Glycyl lysine isopeptide (Lys-Gly) (interchain with G-Cter in SUMO2)). The SAP domain maps to 24 to 58 (YGAWAAQELQARLAEIGAPIQGSREELVERLQTYT). 2 stretches are compositionally biased toward pro residues: residues 91–114 (PMPP…PPPG) and 122–133 (AHPPNLGPPPPL). Residues 140–177 (ALSEEERLKLAQQQAALLMQQEERAKQAAVLMEQERQQ) adopt a coiled-coil conformation. 2 disordered regions span residues 183-356 (GTAV…EYVT) and 383-436 (KKEK…SKKK). Residues 201–221 (PLGPRVAAPVGPVVPTPTVLP) are compositionally biased toward low complexity. 3 positions are modified to omega-N-methylarginine: Arg205, Arg228, and Arg230. Pro residues predominate over residues 224–237 (APVPRPRGPPPPPG). Lys258 is subject to N6-acetyllysine. Residues 260-269 (LQLKESRQEE) show a composition bias toward basic and acidic residues. Lys263 participates in a covalent cross-link: Glycyl lysine isopeptide (Lys-Gly) (interchain with G-Cter in SUMO2). A Phosphoserine modification is found at Ser272. Position 281 is a phosphothreonine (Thr281). Phosphoserine is present on residues Ser290 and Ser292. The residue at position 294 (Thr294) is a Phosphothreonine. Ser300 bears the Phosphoserine mark. The span at 305 to 321 (EKNRKRRNRKKKKKPQR) shows a compositional bias: basic residues. Positions 330–342 (SGDREKDSGRSRG) are enriched in basic and acidic residues. Phosphoserine is present on Ser343. Glycyl lysine isopeptide (Lys-Gly) (interchain with G-Cter in SUMO2) cross-links involve residues Lys383 and Lys395. 2 stretches are compositionally biased toward basic and acidic residues: residues 383–397 (KKEK…DKME) and 405–414 (KGFEEEHKDS). The interval 384–533 (KEKEKEPEKL…QEKEEQKTMK (150 aa)) is required for interaction with PRMT9. Ser414, Ser418, and Ser419 each carry phosphoserine. Residue Lys475 forms a Glycyl lysine isopeptide (Lys-Gly) (interchain with G-Cter in SUMO2) linkage. 2 positions are modified to omega-N-methylarginine: Arg491 and Arg498. Arg491 is modified (symmetric dimethylarginine). Lys526 is covalently cross-linked (Glycyl lysine isopeptide (Lys-Gly) (interchain with G-Cter in SUMO2)). Residues 674 to 740 (AAEFQTKTEE…PGGFSSVPAG (67 aa)) are disordered. Residues 695–715 (EPSDEESSEEEEEEESDEDKP) show a composition bias toward acidic residues. Lys753 is covalently cross-linked (Glycyl lysine isopeptide (Lys-Gly) (interchain with G-Cter in SUMO2)). Residue Thr763 is modified to Phosphothreonine. Glycyl lysine isopeptide (Lys-Gly) (interchain with G-Cter in SUMO2) cross-links involve residues Lys773, Lys826, and Lys840. Positions 827-852 (YEEHVREQQAQVEKEDFSDMVAEHAA) are enriched in basic and acidic residues. Residues 827 to 878 (YEEHVREQQAQVEKEDFSDMVAEHAAKQKQKKRKAQPQDSRGGSKKYKEFKF) are disordered. Ser844 carries the post-translational modification Phosphoserine.

In terms of assembly, component of the 17S U2 SnRNP complex, a ribonucleoprotein complex that contains small nuclear RNA (snRNA) U2 and a number of specific proteins. Part of the SF3B subcomplex of the 17S U2 SnRNP complex. SF3B associates with the splicing subcomplex SF3A and a 12S RNA unit to form the U2 small nuclear ribonucleoproteins complex (U2 snRNP). Within the SF3B complex, interacts directly with SF3B4. Found in a complex with PRMT9, SF3B2 and SF3B4. Interacts (Arg-491-methylated form) with SMN1 (via Tudor domain). Interacts with RBM7. Interacts with ERCC6. Component of the minor spliceosome. Within this complex, interacts with SCNM1 and CRIPT. Methylation at Arg-491 by PRMT9 is required for the interaction with SMN1.

The protein resides in the nucleus. It localises to the nucleus speckle. Functionally, component of the 17S U2 SnRNP complex of the spliceosome, a large ribonucleoprotein complex that removes introns from transcribed pre-mRNAs. The 17S U2 SnRNP complex (1) directly participates in early spliceosome assembly and (2) mediates recognition of the intron branch site during pre-mRNA splicing by promoting the selection of the pre-mRNA branch-site adenosine, the nucleophile for the first step of splicing. Within the 17S U2 SnRNP complex, SF3B2 is part of the SF3B subcomplex, which is required for 'A' complex assembly formed by the stable binding of U2 snRNP to the branchpoint sequence in pre-mRNA. Sequence independent binding of SF3A and SF3B subcomplexes upstream of the branch site is essential, it may anchor U2 snRNP to the pre-mRNA. May also be involved in the assembly of the 'E' complex. Also acts as a component of the minor spliceosome, which is involved in the splicing of U12-type introns in pre-mRNAs. This is Splicing factor 3B subunit 2 from Mus musculus (Mouse).